The sequence spans 192 residues: Pyridoxal 5'-phosphate synthase subunit PdxT (192 aa).

47–49 is an L-glutamine binding site; that stretch reads GES. Catalysis depends on Cys-79, which acts as the Nucleophile. L-glutamine-binding positions include Arg-106 and 134 to 135; that span reads IR. Catalysis depends on charge relay system residues His-170 and Glu-172.

The protein belongs to the glutaminase PdxT/SNO family. In the presence of PdxS, forms a dodecamer of heterodimers. Only shows activity in the heterodimer.

The enzyme catalyses aldehydo-D-ribose 5-phosphate + D-glyceraldehyde 3-phosphate + L-glutamine = pyridoxal 5'-phosphate + L-glutamate + phosphate + 3 H2O + H(+). It catalyses the reaction L-glutamine + H2O = L-glutamate + NH4(+). Its pathway is cofactor biosynthesis; pyridoxal 5'-phosphate biosynthesis. Its function is as follows. Catalyzes the hydrolysis of glutamine to glutamate and ammonia as part of the biosynthesis of pyridoxal 5'-phosphate. The resulting ammonia molecule is channeled to the active site of PdxS. This is Pyridoxal 5'-phosphate synthase subunit PdxT from Anoxybacillus flavithermus (strain DSM 21510 / WK1).